Consider the following 332-residue polypeptide: DNA-directed RNA polymerase 2A (332 aa).

Active-site residues include Asp-33, Lys-108, and Asp-265.

It belongs to the phage and mitochondrial RNA polymerase family.

The catalysed reaction is RNA(n) + a ribonucleoside 5'-triphosphate = RNA(n+1) + diphosphate. In terms of biological role, DNA-dependent RNA polymerase catalyzes the transcription of DNA into RNA using the four ribonucleoside triphosphates as substrates. The protein is DNA-directed RNA polymerase 2A (RPOT2-SYL) of Nicotiana tabacum (Common tobacco).